A 385-amino-acid polypeptide reads, in one-letter code: Cytochrome b (385 aa).

4 helical membrane-spanning segments follow: residues 32-52 (FGSL…TLAM), 76-98 (WFIR…AHMG), 113-133 (PWSI…MGYV), and 179-199 (FFAL…LHLI). Heme b-binding residues include His82 and His96. Heme b contacts are provided by His183 and His197. His202 lines the a ubiquinone pocket. 4 consecutive transmembrane segments (helical) span residues 225–245 (YSFK…LFVF), 289–309 (LGGV…PIVD), 321–341 (ISKL…VLGQ), and 348–368 (FIVL…ILLP).

Belongs to the cytochrome b family. Fungal cytochrome b-c1 complex contains 10 subunits; 3 respiratory subunits, 2 core proteins and 5 low-molecular weight proteins. Cytochrome b-c1 complex is a homodimer. It depends on heme b as a cofactor.

It is found in the mitochondrion inner membrane. Functionally, component of the ubiquinol-cytochrome c reductase complex (complex III or cytochrome b-c1 complex) that is part of the mitochondrial respiratory chain. The b-c1 complex mediates electron transfer from ubiquinol to cytochrome c. Contributes to the generation of a proton gradient across the mitochondrial membrane that is then used for ATP synthesis. The sequence is that of Cytochrome b (COB) from Yarrowia lipolytica (strain CLIB 122 / E 150) (Yeast).